The chain runs to 230 residues: Type II restriction enzyme Eco47I (230 aa).

It carries out the reaction Endonucleolytic cleavage of DNA to give specific double-stranded fragments with terminal 5'-phosphates.. Its function is as follows. A P subtype restriction enzyme that recognizes the double-stranded sequence 5'-GGWCC-3' and cleaves after G-1. This is Type II restriction enzyme Eco47I from Escherichia coli.